Here is a 142-residue protein sequence, read N- to C-terminus: Hemoglobin subunit alpha-1 (142 aa).

The 141-residue stretch at 2–142 (VLSPADKTNV…VSTVLTSKYR (141 aa)) folds into the Globin domain. Histidine 59 provides a ligand contact to O2. A heme b-binding site is contributed by histidine 88.

The protein belongs to the globin family. As to quaternary structure, heterotetramer of two alpha chains and two beta chains. Red blood cells.

In terms of biological role, involved in oxygen transport from the lung to the various peripheral tissues. Functionally, hemopressin acts as an antagonist peptide of the cannabinoid receptor CNR1. Hemopressin-binding efficiently blocks cannabinoid receptor CNR1 and subsequent signaling. This is Hemoglobin subunit alpha-1 (HBA1) from Hylobates lar (Lar gibbon).